A 379-amino-acid chain; its full sequence is UDP-4-amino-4-deoxy-L-arabinose--oxoglutarate aminotransferase (379 aa).

Lys182 bears the N6-(pyridoxal phosphate)lysine mark.

This sequence belongs to the DegT/DnrJ/EryC1 family. ArnB subfamily. In terms of assembly, homodimer. Pyridoxal 5'-phosphate serves as cofactor.

It carries out the reaction UDP-4-amino-4-deoxy-beta-L-arabinose + 2-oxoglutarate = UDP-beta-L-threo-pentopyranos-4-ulose + L-glutamate. It participates in nucleotide-sugar biosynthesis; UDP-4-deoxy-4-formamido-beta-L-arabinose biosynthesis; UDP-4-deoxy-4-formamido-beta-L-arabinose from UDP-alpha-D-glucuronate: step 2/3. The protein operates within bacterial outer membrane biogenesis; lipopolysaccharide biosynthesis. Functionally, catalyzes the conversion of UDP-4-keto-arabinose (UDP-Ara4O) to UDP-4-amino-4-deoxy-L-arabinose (UDP-L-Ara4N). The modified arabinose is attached to lipid A and is required for resistance to polymyxin and cationic antimicrobial peptides. The polypeptide is UDP-4-amino-4-deoxy-L-arabinose--oxoglutarate aminotransferase (Salmonella agona (strain SL483)).